Consider the following 617-residue polypeptide: Mitochondrial Rho GTPase 2 (617 aa).

The Cytoplasmic portion of the chain corresponds to 1 to 590; the sequence is MKRDVRILLL…LNGSDMSSTS (590 aa). The 167-residue stretch at 2–168 folds into the Miro 1 domain; it reads KRDVRILLLG…FYYAQKAVLH (167 aa). The GTP site is built by Gly-16, Lys-17, Thr-18, and Ser-19. Thr-18 is a Mg(2+) binding site. Asp-57 serves as a coordination point for Mg(2+). The GTP site is built by Ser-59, Asn-118, Lys-119, Asp-121, Ala-149, and Lys-150. EF-hand domains are found at residues 184-219 and 304-339; these read QCVR…CFGN and LGHQ…LPYM. The Ca(2+) site is built by Asp-197, Asp-199, Asp-201, Glu-208, Asp-317, Asp-319, Asp-321, and Glu-328. A Miro 2 domain is found at 416-578; that stretch reads RTVFLCKVIG…YSKLTWAAMY (163 aa). GTP is bound by residues Gly-428, Gly-430, Lys-431, and Thr-432. Residues Thr-432 and Glu-474 each coordinate Mg(2+). 2 residues coordinate GTP: Lys-528 and Asp-530. Residues 591 to 613 traverse the membrane as a helical; Anchor for type IV membrane protein segment; it reads FWLRVTLGATIAAMLGFALYRAF. Residues 614–617 are Mitochondrial intermembrane-facing; sequence SRHK.

This sequence belongs to the mitochondrial Rho GTPase family. In terms of assembly, homodimer.

The protein localises to the mitochondrion outer membrane. It catalyses the reaction GTP + H2O = GDP + phosphate + H(+). The enzyme catalyses ATP + H2O = ADP + phosphate + H(+). The catalysed reaction is UTP + H2O = UDP + phosphate + H(+). Its function is as follows. Atypical mitochondrial nucleoside-triphosphatase (NTPase) involved in mitochondrial trafficking. Probably involved in control of anterograde transport of mitochondria and their subcellular distribution. Can hydrolyze GTP, ATP and UTP. This is Mitochondrial Rho GTPase 2 (rhot2) from Danio rerio (Zebrafish).